We begin with the raw amino-acid sequence, 131 residues long: Fumarate reductase subunit C (131 aa).

Transmembrane regions (helical) follow at residues 30 to 50, 58 to 78, and 109 to 129; these read EGTC…VFAL, AGFV…VTLI, and IVRG…AVAL.

It belongs to the FrdC family. As to quaternary structure, part of an enzyme complex containing four subunits: a flavoprotein (FrdA), an iron-sulfur protein (FrdB), and two hydrophobic anchor proteins (FrdC and FrdD).

The protein localises to the cell inner membrane. Its function is as follows. Two distinct, membrane-bound, FAD-containing enzymes are responsible for the catalysis of fumarate and succinate interconversion; fumarate reductase is used in anaerobic growth, and succinate dehydrogenase is used in aerobic growth. Anchors the catalytic components of the fumarate reductase complex to the cell inner membrane, binds quinones. This chain is Fumarate reductase subunit C, found in Proteus mirabilis (strain HI4320).